A 224-amino-acid polypeptide reads, in one-letter code: AAVQPLSVSDAMGARVDAQAWRVDRLTKQFQAISDAADTSIGAAKSGGDIARHMLNSHLDDHWCPSKYHRCGNSPQCMSNMAFCDGVNDCKNHFDEDENRCVVPVTANSTWIGYPAYDHCTQRRPYEMVISITSAPSDIVYKVHQPLKVQVDLFSKKGGLKQSASLHGDAVYCKGSQRLIVAPPEDDRLEIIGQFDGVSNDRFKGYIVREMSGDKCAEFRFFKQ.

The region spanning His62–Val103 is the LDL-receptor class A domain. Disulfide bonds link Cys64-Cys77, Cys71-Cys90, and Cys84-Cys101. N-linked (GlcNAc...) asparagine glycosylation occurs at Asn108.

In terms of assembly, giant hemoglobin is composed of four heme-containing chains (AI to AIV), and two linker chains (AV and AVI).

Acts as a linker for the assembly of heme-containing chains in the construction of giant hemoglobin. In Lamellibrachia sp. (Deep-sea giant tube worm), this protein is Giant hemoglobin linker AV-1 chain.